The following is a 66-amino-acid chain: Metallothionein-like protein type 3 (66 aa).

Belongs to the metallothionein superfamily. Type 15 family.

In terms of biological role, metallothioneins have a high content of cysteine residues that bind various heavy metals. The sequence is that of Metallothionein-like protein type 3 (MT2) from Malus domestica (Apple).